The primary structure comprises 545 residues: Glucose-6-phosphate isomerase (545 aa).

Glu-351 functions as the Proton donor in the catalytic mechanism. Residues His-382 and Lys-510 contribute to the active site.

The protein belongs to the GPI family.

The protein resides in the cytoplasm. The enzyme catalyses alpha-D-glucose 6-phosphate = beta-D-fructose 6-phosphate. Its pathway is carbohydrate biosynthesis; gluconeogenesis. It participates in carbohydrate degradation; glycolysis; D-glyceraldehyde 3-phosphate and glycerone phosphate from D-glucose: step 2/4. Catalyzes the reversible isomerization of glucose-6-phosphate to fructose-6-phosphate. This chain is Glucose-6-phosphate isomerase, found in Shewanella denitrificans (strain OS217 / ATCC BAA-1090 / DSM 15013).